A 264-amino-acid polypeptide reads, in one-letter code: Thymidylate synthase (264 aa).

DUMP contacts are provided by residues Arg-21 and 126-127 (RR). The Nucleophile role is filled by Cys-146. DUMP contacts are provided by residues 166-169 (RSAD), Asn-177, and 207-209 (HLY). Asp-169 is a binding site for (6R)-5,10-methylene-5,6,7,8-tetrahydrofolate. Ala-263 contributes to the (6R)-5,10-methylene-5,6,7,8-tetrahydrofolate binding site.

The protein belongs to the thymidylate synthase family. Bacterial-type ThyA subfamily. In terms of assembly, homodimer.

It localises to the cytoplasm. The enzyme catalyses dUMP + (6R)-5,10-methylene-5,6,7,8-tetrahydrofolate = 7,8-dihydrofolate + dTMP. It participates in pyrimidine metabolism; dTTP biosynthesis. In terms of biological role, catalyzes the reductive methylation of 2'-deoxyuridine-5'-monophosphate (dUMP) to 2'-deoxythymidine-5'-monophosphate (dTMP) while utilizing 5,10-methylenetetrahydrofolate (mTHF) as the methyl donor and reductant in the reaction, yielding dihydrofolate (DHF) as a by-product. This enzymatic reaction provides an intracellular de novo source of dTMP, an essential precursor for DNA biosynthesis. The sequence is that of Thymidylate synthase from Halorhodospira halophila (strain DSM 244 / SL1) (Ectothiorhodospira halophila (strain DSM 244 / SL1)).